A 29-amino-acid chain; its full sequence is Cytochrome b6-f complex subunit 8 (29 aa).

The helical transmembrane segment at 3–23 (ILSLGWAALMTMFTFSLALTV) threads the bilayer.

It belongs to the PetN family. The 4 large subunits of the cytochrome b6-f complex are cytochrome b6, subunit IV (17 kDa polypeptide, PetD), cytochrome f and the Rieske protein, while the 4 small subunits are PetG, PetL, PetM and PetN. The complex functions as a dimer.

It is found in the plastid. The protein localises to the chloroplast thylakoid membrane. Component of the cytochrome b6-f complex, which mediates electron transfer between photosystem II (PSII) and photosystem I (PSI), cyclic electron flow around PSI, and state transitions. In Phaeodactylum tricornutum (strain CCAP 1055/1), this protein is Cytochrome b6-f complex subunit 8.